The sequence spans 349 residues: Transmembrane protein 255A (349 aa).

Helical transmembrane passes span 30–50 (IYVT…GLAA), 57–77 (VTVG…LGII), 89–109 (LVAS…CAIV), and 226–246 (TILN…LGGF). Positions 301–329 (VFPSSPPSGLSDEPQSASPSPSYMWSSSA) are disordered. Positions 316–329 (SASPSPSYMWSSSA) are enriched in low complexity.

Belongs to the TMEM255 family.

The protein localises to the membrane. In Macaca fascicularis (Crab-eating macaque), this protein is Transmembrane protein 255A (TMEM255A).